Consider the following 83-residue polypeptide: MSDKTRLLEGKVSSVAMDKTVVVRAERYVKHPLYGKFVKKTTKYYVHDENNECKEGDVIKFKETRPYSKTKKWCLVDIIHREK.

This sequence belongs to the universal ribosomal protein uS17 family. Part of the 30S ribosomal subunit.

One of the primary rRNA binding proteins, it binds specifically to the 5'-end of 16S ribosomal RNA. This Francisella tularensis subsp. holarctica (strain FTNF002-00 / FTA) protein is Small ribosomal subunit protein uS17.